The primary structure comprises 919 residues: Calcium-activated chloride channel regulator 4 (919 aa).

The first 21 residues, M1–T21, serve as a signal peptide directing secretion. Positions D45–K199 are metalloprotease domain. Residue N75 is glycosylated (N-linked (GlcNAc...) asparagine). H155 contacts Zn(2+). E156 is an active-site residue. Positions 159 and 166 each coordinate Zn(2+). The region spanning I306–L476 is the VWFA domain. Residues N340, N504, N542, N588, N628, N811, N832, N837, and N852 are each glycosylated (N-linked (GlcNAc...) asparagine). Residues A870–S893 form a disordered region. The helical transmembrane segment at V895 to L915 threads the bilayer.

Belongs to the CLCR family. The translation product is autoproteolytically cleaved by the metalloprotease domain in the endoplasmic reticulum into a N-terminal and a C-terminal products that remain physically associated with each other. The cleavage is necessary for calcium-activated chloride channel (CaCC) activation activity. As to expression, primarily expressed in the digestive tract, mainly in colon. Detected in smaller amounts in brain, urogenital organs, testis, and salivary and mammary glands. Highly expressed in the epithelial layer and submucosal gland of the inferior turbinate mucosa. Lower levels in the epithelial layer of nasal polyp.

The protein localises to the cell membrane. The protein resides in the apical cell membrane. Its subcellular location is the secreted. May be involved in mediating calcium-activated chloride conductance. The sequence is that of Calcium-activated chloride channel regulator 4 (CLCA4) from Homo sapiens (Human).